Consider the following 366-residue polypeptide: Glucose 1-dehydrogenase 2 (366 aa).

C39 contacts Zn(2+). S41 lines the substrate pocket. 2 residues coordinate Zn(2+): H66 and E67. Substrate-binding residues include N90, E116, Q152, and D156. Q152 serves as a coordination point for Zn(2+). NADP(+) contacts are provided by residues 212–214 (NRR), 277–279 (FGF), 305–307 (LIN), and K354. A substrate-binding site is contributed by N307.

This sequence belongs to the zinc-containing alcohol dehydrogenase family. Glucose 1-dehydrogenase subfamily. Zn(2+) serves as cofactor.

It catalyses the reaction D-glucose + NAD(+) = D-glucono-1,5-lactone + NADH + H(+). The enzyme catalyses D-glucose + NADP(+) = D-glucono-1,5-lactone + NADPH + H(+). In terms of biological role, catalyzes the NAD(P)(+)-dependent oxidation of D-glucose to D-gluconate via gluconolactone. Can utilize both NAD(+) and NADP(+) as electron acceptor. Is involved in the degradation of glucose through a non-phosphorylative variant of the Entner-Doudoroff pathway. This is Glucose 1-dehydrogenase 2 from Caldivirga maquilingensis (strain ATCC 700844 / DSM 13496 / JCM 10307 / IC-167).